The chain runs to 593 residues: Glutamyl-tRNA(Gln) amidotransferase subunit B, mitochondrial (593 aa).

Residues 1–49 (MLRPWLRQSTRAARSLPCCQCPRPYSSRLPTLTSPSSSVRRLQTSASES) constitute a mitochondrion transit peptide. Low complexity predominate over residues 27–42 (SRLPTLTSPSSSVRRL). The disordered stretch occupies residues 27–80 (SRLPTLTSPSSSVRRLQTSASESQDRVPLRKQLKQNAKALKAEKRQRRESEEAS). Residues 66–80 (LKAEKRQRRESEEAS) are compositionally biased toward basic and acidic residues.

This sequence belongs to the GatB/GatE family. GatB subfamily. Subunit of the heterotrimeric GatCAB amidotransferase (AdT) complex, composed of A, B and C subunits.

It localises to the mitochondrion. It carries out the reaction L-glutamyl-tRNA(Gln) + L-glutamine + ATP + H2O = L-glutaminyl-tRNA(Gln) + L-glutamate + ADP + phosphate + H(+). In terms of biological role, allows the formation of correctly charged Gln-tRNA(Gln) through the transamidation of misacylated Glu-tRNA(Gln) in the mitochondria. The reaction takes place in the presence of glutamine and ATP through an activated gamma-phospho-Glu-tRNA(Gln). The polypeptide is Glutamyl-tRNA(Gln) amidotransferase subunit B, mitochondrial (Aspergillus oryzae (strain ATCC 42149 / RIB 40) (Yellow koji mold)).